Consider the following 350-residue polypeptide: Probable lactoylglutathione lyase, chloroplastic (350 aa).

The transit peptide at 1–61 (MVRIIPMAAS…KLLRRSVNCL (61 aa)) directs the protein to the chloroplast. VOC domains lie at 88–212 (RMLH…LLER) and 218–342 (PLCQ…FVDN). H91 serves as a coordination point for Zn(2+). R95 lines the substrate pocket. E142 contributes to the Zn(2+) binding site. Substrate is bound by residues N146 and H160. Zn(2+) contacts are provided by H160 and E208. E208 acts as the Proton donor/acceptor in catalysis.

Belongs to the glyoxalase I family. It depends on Zn(2+) as a cofactor.

It is found in the plastid. The protein localises to the chloroplast stroma. It catalyses the reaction (R)-S-lactoylglutathione = methylglyoxal + glutathione. Its pathway is secondary metabolite metabolism; methylglyoxal degradation; (R)-lactate from methylglyoxal: step 1/2. Functionally, catalyzes the conversion of hemimercaptal, formed from methylglyoxal and glutathione, to S-lactoylglutathione. This Arabidopsis thaliana (Mouse-ear cress) protein is Probable lactoylglutathione lyase, chloroplastic.